The chain runs to 259 residues: Dickkopf-related protein 2 (259 aa).

The signal sequence occupies residues 1–33; sequence MAALMRVKDSSRCLLLLAAVLMVESSQLGSSRA. The interval 42–70 is disordered; the sequence is LGGETPAQSANRSAGMNQGLAFGGSKKGK. A compositionally biased stretch (polar residues) spans 47-57; sequence PAQSANRSAGM. Asparagine 52 carries N-linked (GlcNAc...) asparagine glycosylation. The tract at residues 78-127 is DKK-type Cys-1; that stretch reads CSSDKECEVGRYCHSPHQGSSACMLCRRKKKRCHRDGMCCPGTRCNNGIC. Intrachain disulfides connect cysteine 183–cysteine 195, cysteine 189–cysteine 204, cysteine 194–cysteine 231, cysteine 214–cysteine 239, and cysteine 233–cysteine 256. The DKK-type Cys-2 stretch occupies residues 183–256; the sequence is CLRSSDCIDG…YSSKARLHVC (74 aa).

This sequence belongs to the dickkopf family. Interacts with LRP5 and LRP6. Post-translationally, may be proteolytically processed by a furin-like protease.

It is found in the secreted. Functionally, antagonizes canonical Wnt signaling by inhibiting LRP5/6 interaction with Wnt and by forming a ternary complex with the transmembrane protein KREMEN that promotes internalization of LRP5/6. DKKs play an important role in vertebrate development, where they locally inhibit Wnt regulated processes such as antero-posterior axial patterning, limb development, somitogenesis and eye formation. In the adult, Dkks are implicated in bone formation and bone disease, cancer and Alzheimer disease. In Mus musculus (Mouse), this protein is Dickkopf-related protein 2.